Consider the following 474-residue polypeptide: Protein NAR1 (474 aa).

[4Fe-4S] cluster-binding residues include C24, C61, C64, C67, C177, C233, C390, and C394.

It belongs to the NARF family. In terms of assembly, part of a complex composed of AE7, CIA1, MMS19 and NAR1. Interacts with CIA1. In terms of tissue distribution, expressed in developing tissues, including shoot apex, young leaves, vascular tissues, root tips, pedicels, carpels and developing seeds.

It localises to the nucleus. The protein localises to the cytoplasm. Its function is as follows. Essential component of the cytosolic iron-sulfur (Fe-S) protein assembly (CIA) machinery. Required for the maturation of extramitochondrial Fe/S proteins. Required for expression of the imprinted FWA gene, for seed development and is involved in the oxidative stress response in vegetative tissues. Involved in the regulation of cell size, ploidy and cell cycle progression. Required for growth under normoxic conditions and necessary for recovery after hypoxic treatment but its action is reactive oxygen species (ROS) independent. This Arabidopsis thaliana (Mouse-ear cress) protein is Protein NAR1.